Here is a 975-residue protein sequence, read N- to C-terminus: Translation initiation factor IF-2 (975 aa).

A compositionally biased stretch (basic and acidic residues) spans 48 to 63 (DHLRKSHGATDGDKRK). Disordered stretches follow at residues 48-84 (DHLR…GKAR) and 98-388 (KRDD…QAPT). The span at 104–115 (ETGADQAQAQTD) shows a compositional bias: low complexity. A compositionally biased stretch (basic and acidic residues) spans 120–177 (AELKRREEEARREAELLEKQAQELRERQERLEREEAERRAREEAAEAERRRAEEEAAA). The span at 178-211 (KRAAAAQAEAAQQAAAAREQAQRAQSEPAEQSAQ) shows a compositional bias: low complexity. The segment covering 212–263 (DEARAAAERAAQREAAKKAEDAAREAADKARAEQEEIRKRREAAEAEARAIR) has biased composition (basic and acidic residues). A compositionally biased stretch (low complexity) spans 302-330 (KPAGEAAAARPAAKKPASGAPAPAAAPAG). Gly residues predominate over residues 359 to 372 (SSGGVDRGWRGGPK). The tr-type G domain maps to 475 to 644 (PRPPVVTVMG…LLQAEVLELK (170 aa)). A G1 region spans residues 484-491 (GHVDHGKT). Residue 484 to 491 (GHVDHGKT) participates in GTP binding. A G2 region spans residues 509–513 (GITQH). The interval 530 to 533 (DTPG) is G3. Residues 530 to 534 (DTPGH) and 584 to 587 (NKID) contribute to the GTP site. The segment at 584 to 587 (NKID) is G4. Residues 620 to 622 (SAK) are G5.

The protein belongs to the TRAFAC class translation factor GTPase superfamily. Classic translation factor GTPase family. IF-2 subfamily.

It is found in the cytoplasm. Functionally, one of the essential components for the initiation of protein synthesis. Protects formylmethionyl-tRNA from spontaneous hydrolysis and promotes its binding to the 30S ribosomal subunits. Also involved in the hydrolysis of GTP during the formation of the 70S ribosomal complex. The protein is Translation initiation factor IF-2 of Burkholderia mallei (strain NCTC 10247).